A 122-amino-acid polypeptide reads, in one-letter code: Large ribosomal subunit protein uL14 (122 aa).

Belongs to the universal ribosomal protein uL14 family. In terms of assembly, part of the 50S ribosomal subunit. Forms a cluster with proteins L3 and L19. In the 70S ribosome, L14 and L19 interact and together make contacts with the 16S rRNA in bridges B5 and B8.

Binds to 23S rRNA. Forms part of two intersubunit bridges in the 70S ribosome. In Bacillus licheniformis (strain ATCC 14580 / DSM 13 / JCM 2505 / CCUG 7422 / NBRC 12200 / NCIMB 9375 / NCTC 10341 / NRRL NRS-1264 / Gibson 46), this protein is Large ribosomal subunit protein uL14.